The chain runs to 293 residues: tRNA (guanine(9)-N1)-methyltransferase (293 aa).

Residues 1–31 (MSNDEINQNEEKVKRTPPLPPVPEGMSKKQW) are disordered. At T16 the chain carries Phosphothreonine. A coiled-coil region spans residues 32–61 (KKMCKRQRWEENKAKYNAERRVKKKRLRHE). Residues 83-279 (EPRINVNQTD…SVLPPRKLDA (197 aa)) enclose the SAM-dependent MTase TRM10-type domain. S-adenosyl-L-methionine contacts are provided by residues 186-187 (LT), G206, 210-214 (DKNRY), C218, L232, and 244-246 (RVL). The Proton acceptor role is filled by D210. S283 carries the post-translational modification Phosphoserine.

The protein belongs to the class IV-like SAM-binding methyltransferase superfamily. TRM10 family. Monomer.

The protein resides in the cytoplasm. It is found in the nucleus. The enzyme catalyses guanosine(9) in tRNA + S-adenosyl-L-methionine = N(1)-methylguanosine(9) in tRNA + S-adenosyl-L-homocysteine + H(+). Functionally, S-adenosyl-L-methionine-dependent guanine N(1)-methyltransferase that catalyzes the formation of N(1)-methylguanine at position 9 (m1G9) in cytoplasmic tRNAs. The protein is tRNA (guanine(9)-N1)-methyltransferase of Saccharomyces cerevisiae (strain ATCC 204508 / S288c) (Baker's yeast).